We begin with the raw amino-acid sequence, 127 residues long: Holo-[acyl-carrier-protein] synthase (127 aa).

2 residues coordinate Mg(2+): Asp9 and Glu58.

The protein belongs to the P-Pant transferase superfamily. AcpS family. The cofactor is Mg(2+).

The protein resides in the cytoplasm. The enzyme catalyses apo-[ACP] + CoA = holo-[ACP] + adenosine 3',5'-bisphosphate + H(+). Its function is as follows. Transfers the 4'-phosphopantetheine moiety from coenzyme A to a Ser of acyl-carrier-protein. The sequence is that of Holo-[acyl-carrier-protein] synthase from Shewanella baltica (strain OS155 / ATCC BAA-1091).